Here is a 317-residue protein sequence, read N- to C-terminus: Serpentine receptor class delta-44 (317 aa).

Helical transmembrane passes span isoleucine 5 to isoleucine 25, methionine 90 to phenylalanine 110, isoleucine 130 to isoleucine 150, arginine 185 to leucine 205, isoleucine 235 to threonine 255, and phenylalanine 264 to phenylalanine 284.

It belongs to the nematode receptor-like protein srd family.

It is found in the membrane. The protein is Serpentine receptor class delta-44 (srd-44) of Caenorhabditis elegans.